A 206-amino-acid polypeptide reads, in one-letter code: Guanylate kinase (206 aa).

Residues 5-183 (FNLLILSGPS…SKEIILSIAK (179 aa)) enclose the Guanylate kinase-like domain. Position 12 to 19 (12 to 19 (GPSGAGKS)) interacts with ATP.

Belongs to the guanylate kinase family.

It localises to the cytoplasm. The enzyme catalyses GMP + ATP = GDP + ADP. Its function is as follows. Essential for recycling GMP and indirectly, cGMP. The polypeptide is Guanylate kinase (gmk) (Helicobacter pylori (strain ATCC 700392 / 26695) (Campylobacter pylori)).